A 346-amino-acid chain; its full sequence is Aspartate-semialdehyde dehydrogenase (346 aa).

Residues 13–16 (TGAV) and 41–42 (RS) contribute to the NADP(+) site. The residue at position 98 (serine 98) is a Phosphoserine. Arginine 101 contributes to the phosphate binding site. The active-site Acyl-thioester intermediate is the cysteine 130. A Phosphotyrosine modification is found at tyrosine 146. A substrate-binding site is contributed by glutamine 157. An NADP(+)-binding site is contributed by 160-161 (SG). Residue lysine 221 coordinates phosphate. Residue arginine 243 coordinates substrate. Histidine 250 serves as the catalytic Proton acceptor. Asparagine 324 is a binding site for NADP(+).

It belongs to the aspartate-semialdehyde dehydrogenase family. In terms of assembly, homodimer.

The catalysed reaction is L-aspartate 4-semialdehyde + phosphate + NADP(+) = 4-phospho-L-aspartate + NADPH + H(+). Its pathway is amino-acid biosynthesis; L-lysine biosynthesis via DAP pathway; (S)-tetrahydrodipicolinate from L-aspartate: step 2/4. It functions in the pathway amino-acid biosynthesis; L-methionine biosynthesis via de novo pathway; L-homoserine from L-aspartate: step 2/3. It participates in amino-acid biosynthesis; L-threonine biosynthesis; L-threonine from L-aspartate: step 2/5. Functionally, catalyzes the NADPH-dependent formation of L-aspartate-semialdehyde (L-ASA) by the reductive dephosphorylation of L-aspartyl-4-phosphate. The chain is Aspartate-semialdehyde dehydrogenase from Bacillus subtilis (strain 168).